Reading from the N-terminus, the 230-residue chain is Bidirectional sugar transporter SWEET2b (230 aa).

At Met1–Asp6 the chain is on the extracellular side. The chain crosses the membrane as a helical span at residues Ile7 to Pro27. The region spanning Gly13–Arg98 is the MtN3/slv 1 domain. The Cytoplasmic segment spans residues Val28–Gly45. The chain crosses the membrane as a helical span at residues Leu46 to Val66. Residues Ala67–Leu72 lie on the Extracellular side of the membrane. Residues Val73–Phe93 traverse the membrane as a helical segment. The Cytoplasmic portion of the chain corresponds to Tyr94–Lys103. The helical transmembrane segment at Ile104–Phe124 threads the bilayer. The Extracellular portion of the chain corresponds to Phe125–Ala137. In terms of domain architecture, MtN3/slv 2 spans Gln133–Lys217. The chain crosses the membrane as a helical span at residues Val138–Ile158. Over Arg159–Pro167 the chain is Cytoplasmic. Residues Phe168–Leu188 traverse the membrane as a helical segment. Residues Arg189–Asp190 are Extracellular-facing. A helical transmembrane segment spans residues Phe191–Tyr211. Residues Ala212–Ala230 lie on the Cytoplasmic side of the membrane.

Belongs to the SWEET sugar transporter family. In terms of assembly, forms homooligomers and/or heterooligomers.

It is found in the cell membrane. Its function is as follows. Mediates both low-affinity uptake and efflux of sugar across the plasma membrane. The protein is Bidirectional sugar transporter SWEET2b (SWEET2B) of Oryza sativa subsp. indica (Rice).